Consider the following 338-residue polypeptide: Nucleoid-associated protein HI_0839 (338 aa).

This sequence belongs to the YejK family.

Its subcellular location is the cytoplasm. It is found in the nucleoid. The sequence is that of Nucleoid-associated protein HI_0839 from Haemophilus influenzae (strain ATCC 51907 / DSM 11121 / KW20 / Rd).